The primary structure comprises 220 residues: Fibroblast growth factor 3 (220 aa).

A signal peptide spans 1 to 19 (MLVIWLLLLALLPEPRVPA). Positions 19–40 (AATASPRAPRDAGGRGGVYEHL) are disordered. Residue asparagine 66 is glycosylated (N-linked (GlcNAc...) asparagine).

The protein belongs to the heparin-binding growth factors family.

It localises to the secreted. Its function is as follows. Plays an important role in the regulation of embryonic development, cell proliferation, and cell differentiation. The sequence is that of Fibroblast growth factor 3 (FGF3) from Gallus gallus (Chicken).